Reading from the N-terminus, the 142-residue chain is Small ribosomal subunit protein uS12y (142 aa).

Proline 61 carries the post-translational modification Hydroxyproline.

It belongs to the universal ribosomal protein uS12 family.

The sequence is that of Small ribosomal subunit protein uS12y (RPS23B) from Arabidopsis thaliana (Mouse-ear cress).